Consider the following 452-residue polypeptide: Phosphoglucosamine mutase (452 aa).

S103 acts as the Phosphoserine intermediate in catalysis. Mg(2+)-binding residues include S103, D243, D245, and D247. Residue S103 is modified to Phosphoserine.

It belongs to the phosphohexose mutase family. It depends on Mg(2+) as a cofactor. Post-translationally, activated by phosphorylation.

The enzyme catalyses alpha-D-glucosamine 1-phosphate = D-glucosamine 6-phosphate. Functionally, catalyzes the conversion of glucosamine-6-phosphate to glucosamine-1-phosphate. The protein is Phosphoglucosamine mutase of Limosilactobacillus fermentum (strain NBRC 3956 / LMG 18251) (Lactobacillus fermentum).